The sequence spans 109 residues: Parvalbumin alpha (109 aa).

N-acetylserine is present on S1. EF-hand domains lie at 38–73 (KSDA…FSDG) and 77–109 (LNDK…AKMT). Residues D51, D53, S55, Y57, E59, E62, D90, D92, D94, K96, and E101 each contribute to the Ca(2+) site.

It belongs to the parvalbumin family. In terms of assembly, monomer.

Its function is as follows. In muscle, parvalbumin is thought to be involved in relaxation after contraction. It binds two calcium ions. This Raja clavata (Thornback ray) protein is Parvalbumin alpha.